Consider the following 100-residue polypeptide: Small ribosomal subunit protein uS14c (100 aa).

It belongs to the universal ribosomal protein uS14 family. In terms of assembly, part of the 30S ribosomal subunit.

It is found in the plastid. The protein resides in the chloroplast. In terms of biological role, binds 16S rRNA, required for the assembly of 30S particles. In Chara vulgaris (Common stonewort), this protein is Small ribosomal subunit protein uS14c.